The chain runs to 398 residues: Arylacetamide deacetylase (398 aa).

Residues 1–4 are Cytoplasmic-facing; the sequence is GVKT. The chain crosses the membrane as a helical; Signal-anchor for type II membrane protein span at residues 5 to 22; sequence VLLLIVGVLGAYYVYTPL. At 23–398 the chain is on the lumenal side; the sequence is PDNIEEPWRL…QYFEWLRENV (376 aa). N77 is a glycosylation site (N-linked (GlcNAc...) asparagine). The short motif at 110–112 is the Involved in the stabilization of the negatively charged intermediate by the formation of the oxyanion hole element; the sequence is HGG. A disulfide bridge links C115 with C339. Residue S188 is part of the active site. The N-linked (GlcNAc...) asparagine glycan is linked to N281. Active-site residues include D342 and H372.

It belongs to the 'GDXG' lipolytic enzyme family. Glycosylated.

The protein resides in the endoplasmic reticulum membrane. It localises to the microsome membrane. It carries out the reaction a triacylglycerol + H2O = a diacylglycerol + a fatty acid + H(+). With respect to regulation, inhibited by diisopropylphosphofluoridate (DFP). Its function is as follows. Displays cellular triglyceride lipase activity in liver, increases the levels of intracellular fatty acids derived from the hydrolysis of newly formed triglyceride stores and plays a role in very low-density lipoprotein assembly. Displays serine esterase activity in liver. Deacetylates a variety of arylacetamide substrates, including xenobiotic compounds and procarcinogens, converting them to the primary arylamide compounds and increasing their toxicity. The polypeptide is Arylacetamide deacetylase (Oryctolagus cuniculus (Rabbit)).